The following is a 320-amino-acid chain: Aurora kinase B (320 aa).

Residues 1-10 are compositionally biased toward basic and acidic residues; that stretch reads MQNKENREPR. The interval 1–38 is disordered; it reads MQNKENREPRVQQTPSAGVGPLRVEMNPDTHAVSGPGR. In terms of domain architecture, Protein kinase spans 53–303; the sequence is FDIGRPLGKG…LRSVMEHPWV (251 aa). ATP is bound by residues 59 to 67 and K82; that span reads LGKGKFGNV. D176 functions as the Proton acceptor in the catalytic mechanism.

It belongs to the protein kinase superfamily. Ser/Thr protein kinase family. Aurora subfamily. In terms of assembly, component of the chromosomal passenger complex (CPC).

Its subcellular location is the nucleus. It is found in the chromosome. It localises to the centromere. The protein localises to the cytoplasm. The protein resides in the cytoskeleton. Its subcellular location is the spindle. It is found in the midbody. The enzyme catalyses L-seryl-[protein] + ATP = O-phospho-L-seryl-[protein] + ADP + H(+). It carries out the reaction L-threonyl-[protein] + ATP = O-phospho-L-threonyl-[protein] + ADP + H(+). Kinase activity is stimulated by cell-cycle specific phosphorylation. Serine/threonine-protein kinase component of the chromosomal passenger complex (CPC), a complex that acts as a key regulator of mitosis. The CPC complex has essential functions at the centromere in ensuring correct chromosome alignment and segregation and is required for chromatin-induced microtubule stabilization and spindle assembly. Involved in the bipolar attachment of spindle microtubules to kinetochores and is a key regulator for the onset of cytokinesis during mitosis. Required for central/midzone spindle assembly and cleavage furrow formation. Key component of the cytokinesis checkpoint, a process required to delay abscission to prevent both premature resolution of intercellular chromosome bridges and accumulation of DNA damage. Phosphorylates 'Ser-10' of histone H3 during mitosis. This Danio rerio (Zebrafish) protein is Aurora kinase B (aurkb).